A 498-amino-acid chain; its full sequence is Polygalacturonan/rhamnogalacturonan-binding protein YtcQ (498 aa).

An N-terminal signal peptide occupies residues 1–22 (MGNKWRVLLIVLVLALGGVLAG). The N-palmitoyl cysteine moiety is linked to residue Cys23. Cys23 carries S-diacylglycerol cysteine lipidation.

Belongs to the bacterial solute-binding protein 1 family. As to quaternary structure, the complex is probably composed of two ATP-binding proteins (MsmX), two transmembrane proteins (YtcP and YteP) and a solute-binding protein (YtcQ).

It localises to the cell membrane. In terms of biological role, involved in pectin degradation. Part of the ABC transporter complex YtcQP-YteP involved in the uptake of polygalacturonan and rhamnogalacturonan type I. The polypeptide is Polygalacturonan/rhamnogalacturonan-binding protein YtcQ (ytcQ) (Bacillus subtilis (strain 168)).